We begin with the raw amino-acid sequence, 125 residues long: Putative RNA polymerase sigma-G factor (125 aa).

Belongs to the sigma-70 factor family.

Sigma factors are initiation factors that promote the attachment of RNA polymerase to specific initiation sites and are then released. The protein is Putative RNA polymerase sigma-G factor of Bacillus thuringiensis subsp. kurstaki.